The chain runs to 638 residues: MAAAQGPVAPSSLEQNGAVPSEATKKDQNLKRGNWGNQIEFVLTSVGYAVGLGNVWRFPYLCYRNGGGAFMFPYFIMLIFCGIPLFFMELSFGQFASQGCLGVWRISPMFKGVGYGMMVVSTYIGIYYNVVICIAFYYFFSSMTPVLPWTYCNNPWNTPDCMSVLDNPNITNGSQPPALPGNVSQALNQTLKRTSPSEEYWRLYVLKLSDDIGNFGEVRLPLLGCLGVSWVVVFLCLIRGVKSSGKVVYFTATFPYVVLTILFIRGVTLEGAFTGIMYYLTPQWDKILEAKVWGDAASQIFYSLGCAWGGLVTMASYNKFHNNCYRDSVIISITNCATSVYAGFVIFSILGFMANHLGVDVSRVADHGPGLAFVAYPEALTLLPISPLWSLLFFFMLILLGLGTQFCLLETLVTAIVDEVGNEWILQKKTYVTLGVAVAGFLLGIPLTSQAGIYWLLLMDNYAASFSLVIISCIMCVSIMYIYGHQNYFQDIQMMLGFPPPLFFQICWRFVSPAIIFFILIFSVIQYQPITYNQYQYPSWRVRIGFLMALSSVICIPLYALFQFCRTDGDTLLHRLKNATKPSRDWGPALLEHRTRRYAPTTTPSPEDGLEVQPLHPDKAQIPMVGSNGSSRFQDSRI.

A disordered region spans residues 1-29 (MAAAQGPVAPSSLEQNGAVPSEATKKDQN). Topologically, residues 1 to 40 (MAAAQGPVAPSSLEQNGAVPSEATKKDQNLKRGNWGNQIE) are cytoplasmic. Transmembrane regions (helical) follow at residues 41–61 (FVLTSVGYAVGLGNVWRFPYL), 69–88 (AFMFPYFIMLIFCGIPLFFM), and 112–132 (GVGYGMMVVSTYIGIYYNVVI). At 133 to 219 (CIAFYYFFSS…DDIGNFGEVR (87 aa)) the chain is on the extracellular side. Residues asparagine 169, asparagine 172, asparagine 182, and asparagine 188 are each glycosylated (N-linked (GlcNAc...) asparagine). 9 helical membrane passes run 220-238 (LPLLGCLGVSWVVVFLCLI), 247-264 (VVYFTATFPYVVLTILFI), 300-317 (IFYSLGCAWGGLVTMASY), 329-350 (VIISITNCATSVYAGFVIFSIL), 383-402 (LPISPLWSLLFFFMLILLGL), 431-449 (YVTLGVAVAGFLLGIPLTS), 465-485 (SFSLVIISCIMCVSIMYIYGH), 506-525 (ICWRFVSPAIIFFILIFSVI), and 544-562 (IGFLMALSSVICIPLYALF). The Cytoplasmic segment spans residues 563-638 (QFCRTDGDTL…GSSRFQDSRI (76 aa)). The tract at residues 597 to 638 (RYAPTTTPSPEDGLEVQPLHPDKAQIPMVGSNGSSRFQDSRI) is disordered. Residue threonine 603 is modified to Phosphothreonine. Serine 605 and serine 630 each carry phosphoserine. Residues 627–638 (SNGSSRFQDSRI) form an essential for interaction with EXOC1 region. The segment covering 627–638 (SNGSSRFQDSRI) has biased composition (polar residues).

The protein belongs to the sodium:neurotransmitter symporter (SNF) (TC 2.A.22) family. SLC6A9 subfamily. Interacts with EXOC1; interaction increases the transporter capacity of SLC6A9 probably by promoting its insertion into the cell membrane. Interacts with EXOC3 and EXOC4.

The protein resides in the cell membrane. The catalysed reaction is glycine(out) + chloride(out) + 2 Na(+)(out) = glycine(in) + chloride(in) + 2 Na(+)(in). Functionally, sodium- and chloride-dependent glycine transporter which is essential for regulating glycine concentrations at inhibitory glycinergic synapses. This Bos taurus (Bovine) protein is Sodium- and chloride-dependent glycine transporter 1 (SLC6A9).